The following is a 336-amino-acid chain: Anthranilate phosphoribosyltransferase (336 aa).

5-phospho-alpha-D-ribose 1-diphosphate is bound by residues glycine 82, 85-86 (GD), threonine 90, 92-95 (NIST), 110-118 (KHGNRFASG), and serine 122. Glycine 82 provides a ligand contact to anthranilate. Serine 94 is a Mg(2+) binding site. Residue asparagine 113 participates in anthranilate binding. Arginine 168 is a binding site for anthranilate. Mg(2+) contacts are provided by aspartate 227 and glutamate 228.

It belongs to the anthranilate phosphoribosyltransferase family. In terms of assembly, homodimer. Requires Mg(2+) as cofactor.

It carries out the reaction N-(5-phospho-beta-D-ribosyl)anthranilate + diphosphate = 5-phospho-alpha-D-ribose 1-diphosphate + anthranilate. It participates in amino-acid biosynthesis; L-tryptophan biosynthesis; L-tryptophan from chorismate: step 2/5. Functionally, catalyzes the transfer of the phosphoribosyl group of 5-phosphorylribose-1-pyrophosphate (PRPP) to anthranilate to yield N-(5'-phosphoribosyl)-anthranilate (PRA). The polypeptide is Anthranilate phosphoribosyltransferase (Desulfitobacterium hafniense (strain Y51)).